Reading from the N-terminus, the 383-residue chain is Putative glutamate--cysteine ligase 2-2 (383 aa).

The disordered stretch occupies residues 35–56 (RGDRDGAGGPPGGADPDGDLDG).

Belongs to the glutamate--cysteine ligase type 2 family. YbdK subfamily.

The catalysed reaction is L-cysteine + L-glutamate + ATP = gamma-L-glutamyl-L-cysteine + ADP + phosphate + H(+). Its function is as follows. ATP-dependent carboxylate-amine ligase which exhibits weak glutamate--cysteine ligase activity. The polypeptide is Putative glutamate--cysteine ligase 2-2 (Frankia alni (strain DSM 45986 / CECT 9034 / ACN14a)).